The sequence spans 182 residues: Ribosome-recycling factor (182 aa).

Belongs to the RRF family.

It localises to the cytoplasm. In terms of biological role, responsible for the release of ribosomes from messenger RNA at the termination of protein biosynthesis. May increase the efficiency of translation by recycling ribosomes from one round of translation to another. The chain is Ribosome-recycling factor from Parasynechococcus marenigrum (strain WH8102).